A 735-amino-acid polypeptide reads, in one-letter code: Phosphoribosylformylglycinamidine synthase subunit PurL (735 aa).

The active site involves histidine 48. ATP contacts are provided by tyrosine 51 and lysine 90. Glutamate 92 is a binding site for Mg(2+). Substrate is bound by residues 93-96 (SHNH) and arginine 115. Histidine 94 serves as the catalytic Proton acceptor. Aspartate 116 lines the Mg(2+) pocket. Glutamine 239 is a substrate binding site. Aspartate 267 contributes to the Mg(2+) binding site. A substrate-binding site is contributed by 311 to 313 (ESQ). 2 residues coordinate ATP: aspartate 492 and glycine 529. Residue asparagine 530 coordinates Mg(2+). Serine 532 is a substrate binding site.

The protein belongs to the FGAMS family. In terms of assembly, monomer. Part of the FGAM synthase complex composed of 1 PurL, 1 PurQ and 2 PurS subunits.

The protein localises to the cytoplasm. The enzyme catalyses N(2)-formyl-N(1)-(5-phospho-beta-D-ribosyl)glycinamide + L-glutamine + ATP + H2O = 2-formamido-N(1)-(5-O-phospho-beta-D-ribosyl)acetamidine + L-glutamate + ADP + phosphate + H(+). The protein operates within purine metabolism; IMP biosynthesis via de novo pathway; 5-amino-1-(5-phospho-D-ribosyl)imidazole from N(2)-formyl-N(1)-(5-phospho-D-ribosyl)glycinamide: step 1/2. In terms of biological role, part of the phosphoribosylformylglycinamidine synthase complex involved in the purines biosynthetic pathway. Catalyzes the ATP-dependent conversion of formylglycinamide ribonucleotide (FGAR) and glutamine to yield formylglycinamidine ribonucleotide (FGAM) and glutamate. The FGAM synthase complex is composed of three subunits. PurQ produces an ammonia molecule by converting glutamine to glutamate. PurL transfers the ammonia molecule to FGAR to form FGAM in an ATP-dependent manner. PurS interacts with PurQ and PurL and is thought to assist in the transfer of the ammonia molecule from PurQ to PurL. The polypeptide is Phosphoribosylformylglycinamidine synthase subunit PurL (Bradyrhizobium sp. (strain BTAi1 / ATCC BAA-1182)).